The chain runs to 393 residues: Methylthioribose kinase (393 aa).

Residues Asn-38, Lys-53, and 107–109 (EDL) each bind ATP. Position 225 (Asp-225) interacts with substrate. An ATP-binding site is contributed by 242–244 (DPE). Arg-332 is a substrate binding site.

Belongs to the methylthioribose kinase family. In terms of assembly, homodimer.

It carries out the reaction 5-(methylsulfanyl)-D-ribose + ATP = 5-(methylsulfanyl)-alpha-D-ribose 1-phosphate + ADP + H(+). The protein operates within amino-acid biosynthesis; L-methionine biosynthesis via salvage pathway; S-methyl-5-thio-alpha-D-ribose 1-phosphate from S-methyl-5'-thioadenosine (hydrolase route): step 2/2. Its function is as follows. Catalyzes the phosphorylation of methylthioribose into methylthioribose-1-phosphate. This is Methylthioribose kinase from Bacillus cereus (strain ATCC 10987 / NRS 248).